A 452-amino-acid polypeptide reads, in one-letter code: Zinc finger protein 672 (452 aa).

4 consecutive C2H2-type zinc fingers follow at residues 14–36 (YSCS…ERAH), 42–64 (FRCL…RRTH), 70–92 (YICS…LGAH), and 99–122 (CPCR…RRQH). Residues 128–150 (RRCPLCARTFRQSALLFHQARAH) form a C2H2-type 5; degenerate zinc finger. 9 C2H2-type zinc fingers span residues 163-185 (HRCA…ARIH), 199-221 (HQCG…LQTH), 227-249 (FKCP…QRTH), 255-277 (YACG…RRSH), 283-305 (HACA…QRIH), 311-333 (FACP…RRTH), 339-361 (YRCE…RRNH), 367-389 (HKCP…RKTH), and 395-417 (AECA…QRAH).

This sequence belongs to the krueppel C2H2-type zinc-finger protein family.

It is found in the nucleus. Functionally, may be involved in transcriptional regulation. The polypeptide is Zinc finger protein 672 (Homo sapiens (Human)).